A 126-amino-acid polypeptide reads, in one-letter code: Spermidine export protein MdtJ (126 aa).

Helical transmembrane passes span 1 to 21 (MIYW…TLSM), 30 to 50 (ITGH…LSLA), 54 to 74 (VALG…ITLF), and 81 to 101 (EPFS…IVML).

The protein belongs to the drug/metabolite transporter (DMT) superfamily. Small multidrug resistance (SMR) (TC 2.A.7.1) family. MdtJ subfamily. Forms a complex with MdtI.

The protein localises to the cell inner membrane. Functionally, catalyzes the excretion of spermidine. This chain is Spermidine export protein MdtJ, found in Sodalis glossinidius (strain morsitans).